Here is a 202-residue protein sequence, read N- to C-terminus: Orotate phosphoribosyltransferase (202 aa).

Residues K93 and 113 to 121 contribute to the 5-phospho-alpha-D-ribose 1-diphosphate site; that span reads EDIITTGGS. T117 and R145 together coordinate orotate.

The protein belongs to the purine/pyrimidine phosphoribosyltransferase family. PyrE subfamily. Homodimer. Requires Mg(2+) as cofactor.

It carries out the reaction orotidine 5'-phosphate + diphosphate = orotate + 5-phospho-alpha-D-ribose 1-diphosphate. It participates in pyrimidine metabolism; UMP biosynthesis via de novo pathway; UMP from orotate: step 1/2. In terms of biological role, catalyzes the transfer of a ribosyl phosphate group from 5-phosphoribose 1-diphosphate to orotate, leading to the formation of orotidine monophosphate (OMP). This chain is Orotate phosphoribosyltransferase, found in Campylobacter concisus (strain 13826).